The chain runs to 520 residues: Putative lipase ATG15 (520 aa).

Over 1-14 (MLHKSPSRKRFASP) the chain is Cytoplasmic. A helical; Signal-anchor for type II membrane protein transmembrane segment spans residues 15 to 35 (LHLGCILTLTVLCLIAYYFAL). Residues 36 to 520 (PDYLSVGKSS…WLGFCTKYEL (485 aa)) lie on the Lumenal side of the membrane. N-linked (GlcNAc...) asparagine glycans are attached at residues asparagine 173, asparagine 202, and asparagine 208. The Charge relay system role is filled by serine 332.

The protein belongs to the AB hydrolase superfamily. Lipase family. In terms of assembly, binds to both phosphatidylinositol (PI) and phosphatidylinositol 3,5-bisphosphate (PIP2).

The protein localises to the endosome. Its subcellular location is the multivesicular body membrane. It is found in the prevacuolar compartment membrane. It catalyses the reaction a triacylglycerol + H2O = a diacylglycerol + a fatty acid + H(+). Functionally, lipase which is essential for lysis of subvacuolar cytoplasm to vacuole targeted bodies and intravacuolar autophagic bodies. Involved in the lysis of intravacuolar multivesicular body (MVB) vesicles. The intravacuolar membrane disintegration by ATG15 is critical to life span extension. The polypeptide is Putative lipase ATG15 (ATG15) (Saccharomyces cerevisiae (strain YJM789) (Baker's yeast)).